The primary structure comprises 345 residues: Phosphoribosylformylglycinamidine cyclo-ligase (345 aa).

This sequence belongs to the AIR synthase family.

The protein resides in the cytoplasm. It catalyses the reaction 2-formamido-N(1)-(5-O-phospho-beta-D-ribosyl)acetamidine + ATP = 5-amino-1-(5-phospho-beta-D-ribosyl)imidazole + ADP + phosphate + H(+). Its pathway is purine metabolism; IMP biosynthesis via de novo pathway; 5-amino-1-(5-phospho-D-ribosyl)imidazole from N(2)-formyl-N(1)-(5-phospho-D-ribosyl)glycinamide: step 2/2. The chain is Phosphoribosylformylglycinamidine cyclo-ligase from Escherichia coli O6:K15:H31 (strain 536 / UPEC).